A 314-amino-acid polypeptide reads, in one-letter code: tRNA pseudouridine synthase B (314 aa).

D47 functions as the Nucleophile in the catalytic mechanism.

It belongs to the pseudouridine synthase TruB family. Type 1 subfamily.

It catalyses the reaction uridine(55) in tRNA = pseudouridine(55) in tRNA. In terms of biological role, responsible for synthesis of pseudouridine from uracil-55 in the psi GC loop of transfer RNAs. This chain is tRNA pseudouridine synthase B, found in Vibrio vulnificus (strain CMCP6).